Reading from the N-terminus, the 399-residue chain is Trimethyllysine dioxygenase (399 aa).

The Fe cation site is built by His214, Asp216, and His360.

It belongs to the gamma-BBH/TMLD family. The cofactor is Fe(2+). Requires L-ascorbate as cofactor.

Its subcellular location is the cytoplasm. The catalysed reaction is N(6),N(6),N(6)-trimethyl-L-lysine + 2-oxoglutarate + O2 = (3S)-3-hydroxy-N(6),N(6),N(6)-trimethyl-L-lysine + succinate + CO2. The protein operates within amine and polyamine biosynthesis; carnitine biosynthesis. Its function is as follows. Converts trimethyllysine (TML) into hydroxytrimethyllysine (HTML). The protein is Trimethyllysine dioxygenase of Meyerozyma guilliermondii (strain ATCC 6260 / CBS 566 / DSM 6381 / JCM 1539 / NBRC 10279 / NRRL Y-324) (Yeast).